The sequence spans 295 residues: Pyridoxal 5'-phosphate synthase subunit PdxS (295 aa).

Aspartate 23 provides a ligand contact to D-ribose 5-phosphate. Lysine 80 serves as the catalytic Schiff-base intermediate with D-ribose 5-phosphate. D-ribose 5-phosphate is bound at residue glycine 152. Arginine 164 lines the D-glyceraldehyde 3-phosphate pocket. D-ribose 5-phosphate is bound by residues glycine 213 and 234–235; that span reads GS.

Belongs to the PdxS/SNZ family. As to quaternary structure, in the presence of PdxT, forms a dodecamer of heterodimers.

It carries out the reaction aldehydo-D-ribose 5-phosphate + D-glyceraldehyde 3-phosphate + L-glutamine = pyridoxal 5'-phosphate + L-glutamate + phosphate + 3 H2O + H(+). The protein operates within cofactor biosynthesis; pyridoxal 5'-phosphate biosynthesis. Functionally, catalyzes the formation of pyridoxal 5'-phosphate from ribose 5-phosphate (RBP), glyceraldehyde 3-phosphate (G3P) and ammonia. The ammonia is provided by the PdxT subunit. Can also use ribulose 5-phosphate and dihydroxyacetone phosphate as substrates, resulting from enzyme-catalyzed isomerization of RBP and G3P, respectively. This is Pyridoxal 5'-phosphate synthase subunit PdxS from Methanopyrus kandleri (strain AV19 / DSM 6324 / JCM 9639 / NBRC 100938).